The chain runs to 1073 residues: Self-sufficient cytochrome P450 monooxygenase CYP505AG1 (1073 aa).

C409 is a heme binding site. The region spanning 501 to 644 (VTILYGSNSG…DLENWEDEHL (144 aa)) is the Flavodoxin-like domain. FMN is bound by residues 507–511 (SNSGT) and 588–620 (VFAC…HRVA). The region spanning 680 to 909 (HNAVECIVSE…RPCKKQFHLP (230 aa)) is the FAD-binding FR-type domain.

It in the N-terminal section; belongs to the cytochrome P450 family. The cofactor is FAD. FMN serves as cofactor. It depends on heme as a cofactor.

It catalyses the reaction 2 oxidized [cytochrome P450] + NADPH = 2 reduced [cytochrome P450] + NADP(+) + H(+). It carries out the reaction an organic molecule + reduced [NADPH--hemoprotein reductase] + O2 = an alcohol + oxidized [NADPH--hemoprotein reductase] + H2O + H(+). The catalysed reaction is dodecanoate + reduced [NADPH--hemoprotein reductase] + O2 = 10-hydroxydodecanoate + oxidized [NADPH--hemoprotein reductase] + H2O + H(+). The enzyme catalyses tetradecanoate + reduced [NADPH--hemoprotein reductase] + O2 = 12-hydroxytetradecanoate + oxidized [NADPH--hemoprotein reductase] + H2O + H(+). Functionally, self-sufficient cytochrome P450 monooxygenase that catalyzes the regioselective in-chain hydroxylation of alkanes, fatty alcohols, and fatty acids, giving sub-terminal hydroxylation by acting preferentially on the omega-2 position. Prefers fatty acids as substrates, since it hydroxylates the small amounts of dodecanoic acid formed in the presence of an excess of 1-dodecanol. The polypeptide is Self-sufficient cytochrome P450 monooxygenase CYP505AG1 (Oidiodendron maius (strain Zn)).